Here is a 440-residue protein sequence, read N- to C-terminus: Ribulose bisphosphate carboxylase large chain (440 aa).

Lysine 4 bears the N6,N6,N6-trimethyllysine mark. 2 residues coordinate substrate: asparagine 113 and threonine 163. Lysine 165 functions as the Proton acceptor in the catalytic mechanism. Lysine 167 is a binding site for substrate. Residues lysine 191, aspartate 193, and glutamate 194 each coordinate Mg(2+). The residue at position 191 (lysine 191) is an N6-carboxylysine. Residue histidine 284 is the Proton acceptor of the active site. Substrate contacts are provided by arginine 285, histidine 317, and serine 369.

Belongs to the RuBisCO large chain family. Type I subfamily. In terms of assembly, heterohexadecamer of 8 large chains and 8 small chains; disulfide-linked. The disulfide link is formed within the large subunit homodimers. Requires Mg(2+) as cofactor. The disulfide bond which can form in the large chain dimeric partners within the hexadecamer appears to be associated with oxidative stress and protein turnover.

It localises to the plastid. The protein localises to the chloroplast. The enzyme catalyses 2 (2R)-3-phosphoglycerate + 2 H(+) = D-ribulose 1,5-bisphosphate + CO2 + H2O. It carries out the reaction D-ribulose 1,5-bisphosphate + O2 = 2-phosphoglycolate + (2R)-3-phosphoglycerate + 2 H(+). Functionally, ruBisCO catalyzes two reactions: the carboxylation of D-ribulose 1,5-bisphosphate, the primary event in carbon dioxide fixation, as well as the oxidative fragmentation of the pentose substrate in the photorespiration process. Both reactions occur simultaneously and in competition at the same active site. This is Ribulose bisphosphate carboxylase large chain from Pteris vittata (Chinese ladder brake).